Reading from the N-terminus, the 137-residue chain is Proofreading thioesterase EntH (137 aa).

E63 (nucleophile or proton acceptor) is an active-site residue.

Belongs to the thioesterase PaaI family. In terms of assembly, homotetramer. Dimer of dimers. Interacts specifically with the aryl carrier protein (ArCP) domain of EntB.

It localises to the cytoplasm. It functions in the pathway siderophore biosynthesis; enterobactin biosynthesis. Required for optimal enterobactin synthesis. Acts as a proofreading enzyme that prevents EntB misacylation by hydrolyzing the thioester bound existing between EntB and wrongly charged molecules. The chain is Proofreading thioesterase EntH from Cronobacter turicensis (strain DSM 18703 / CCUG 55852 / LMG 23827 / z3032).